Consider the following 657-residue polypeptide: Glycogen debranching enzyme (657 aa).

Asp334 (nucleophile) is an active-site residue. The active-site Proton donor is Glu369. The tract at residues 458–485 (ANGEQNRDGTNSNFSFNHGTEGLEADET) is disordered. Polar residues predominate over residues 465-475 (DGTNSNFSFNH).

Belongs to the glycosyl hydrolase 13 family.

It localises to the cytoplasm. It catalyses the reaction Hydrolysis of (1-&gt;6)-alpha-D-glucosidic linkages to branches with degrees of polymerization of three or four glucose residues in limit dextrin.. The protein operates within glycan degradation; glycogen degradation. With respect to regulation, slightly activated by Ca(2+). Inhibited by divalent cations such as Zn(2+), Cu(2+), Fe(2+), Mg(2+), Mn(2+), but only slightly inhibited by EDTA. Its function is as follows. Removes maltotriose and maltotetraose chains that are attached by 1,6-alpha-linkage to the limit dextrin main chain, generating a debranched limit dextrin. Hydrolyzes the alpha-1,6-glycosidic linkages in amylopectin while does not hydrolyze the alpha-1,4-glycosidic linkages in amylose. Native glycogen is a poor substrate. The protein is Glycogen debranching enzyme of Dickeya chrysanthemi (Pectobacterium chrysanthemi).